The chain runs to 403 residues: Metacaspase-1A (403 aa).

The disordered stretch occupies residues 1–93 (MQHHHHSSYG…PPTDPVAFGH (93 aa)). Over residues 18-31 (GQAYRQQQPYYGQP) the composition is skewed to low complexity. The span at 32 to 55 (SPQPYAQPPPPNYQRPSGYGPPPS) shows a compositional bias: pro residues. Active-site residues include H194 and C250.

This sequence belongs to the peptidase C14B family.

Involved in cell death (apoptosis). The protein is Metacaspase-1A (casA) of Aspergillus terreus (strain NIH 2624 / FGSC A1156).